Here is a 180-residue protein sequence, read N- to C-terminus: Probable macrolide acetyltransferase (180 aa).

Belongs to the transferase hexapeptide repeat family.

The chain is Probable macrolide acetyltransferase from Lysinibacillus sphaericus (Bacillus sphaericus).